The primary structure comprises 622 residues: Phosphoribomutase (622 aa).

Substrate contacts are provided by residues T57, R61, 158–159 (SH), and K168. S158 acts as the Phosphoserine intermediate in catalysis. S158 is a binding site for Mg(2+). The residue at position 158 (S158) is a Phosphoserine. Mg(2+) contacts are provided by D325, D327, and D329. Substrate contacts are provided by residues 329-330 (DR), T404, 428-430 (EEA), and K442.

Belongs to the phosphohexose mutase family. It depends on Mg(2+) as a cofactor.

Its subcellular location is the cytoplasm. It is found in the nucleus. The enzyme catalyses alpha-D-ribose 1-phosphate = D-ribose 5-phosphate. Functionally, major phosphoribomutase that converts ribose 1-phosphate to ribose 5-phosphate. Involved in ribose salvage via the pentose phosphate pathway. The polypeptide is Phosphoribomutase (Saccharomyces cerevisiae (strain ATCC 204508 / S288c) (Baker's yeast)).